Consider the following 458-residue polypeptide: MIQRDPNLLLSWRADQHPDAPMHNDQRYMTGFGNEFATEAVAGSLPIGQNSPQRVAHGLYAEQLSGTAFTAPRGQNRRSWLYRIRPAAVHGSFSLVEQSHFHNDFGAGPVPPDQLRWSPLPLPSVPTDFVDGLYTMAGNGGPEAMSGVGVHVYAANASMQDRFFYDADGELLLVPQQGRLRVHTELGVLALEPQQIGVIPRGMRFRVELLDAAARGYVCENFGGLLRLPDLGPIGANGLANPRDFETPHAAFEQREGTFELVAKFQGHLWRADIGHSPLDVVAWHGNYAPYRYDLRRFNTIGSISFDHPDPSIFTVLTSPSDTHGTANMDFAIFPPRWLVAQHTFRPPWFHRNVASEFMGLVHGVYDAKAEGFAPGGASLHNCMSGHGPDAATFDKASQADLTRPDVIADTMAFMFETRAVLRPTQQALSAAHRQADYQQCWSGLRAAFQPPITEDAT.

Histidine 308 acts as the Proton acceptor in catalysis. 2 residues coordinate Fe cation: histidine 351 and glutamate 357. Residues tyrosine 366 and histidine 387 each contribute to the homogentisate site. Histidine 387 contributes to the Fe cation binding site.

This sequence belongs to the homogentisate dioxygenase family. As to quaternary structure, hexamer; dimer of trimers. It depends on Fe cation as a cofactor.

The catalysed reaction is homogentisate + O2 = 4-maleylacetoacetate + H(+). The protein operates within amino-acid degradation; L-phenylalanine degradation; acetoacetate and fumarate from L-phenylalanine: step 4/6. In terms of biological role, involved in the catabolism of homogentisate (2,5-dihydroxyphenylacetate or 2,5-OH-PhAc), a central intermediate in the degradation of phenylalanine and tyrosine. Catalyzes the oxidative ring cleavage of the aromatic ring of homogentisate to yield maleylacetoacetate. The polypeptide is Homogentisate 1,2-dioxygenase (Xanthomonas axonopodis pv. citri (strain 306)).